The primary structure comprises 414 residues: MTPPILIIGAGLSGLTISRILTNASIPNIVFEASTPDRSQGYAISLREWGYTSLLTALGDLPLRSLTRGVAPDRILGGTGWIDQALRDNHTGNLLVAPDPEAKQCIVRANRNALRTWIADSGDEEVDIRYGHRLRSVQGSMGNVTATFDNGAKYQGSLVIAADGVHSSVRSQILPHVSPDIVPVVVYHGELELPRKEFDNLIRPHSGPSNILAGVGDGFNTPITVCNITPTHVHLDWSYSRPSTENKENKDPLYRPHVSAAEAKQIPPALLEEIASRDLARPWSQLLNAEALPTHRVFNWVSRCVSVTREDVNAAQKQGVVFIGDSWHAMPIFGGEGGNHALVDAVELAEALTGKEGNLDAAVTGYYDRAWRRCQEAVRRSRQRFFQLHRPMREWMEIAEKKKMMAAMKGVEAH.

Residues Glu-32, Ala-43, Arg-115, Asp-325, and Gly-338 each contribute to the FAD site.

It belongs to the paxM FAD-dependent monooxygenase family. FAD serves as cofactor.

The enzyme catalyses 3-(2,4-dioxopentyl)-3,6,8,9-tetrahydroxy-1-oxo-1,2,3,4-tetrahydroanthracene-2-carboxyl-[ACP] + NADPH + O2 + H(+) = 3-(2,4-dioxopentyl)-2,3,6,8,9-pentahydroxy-1-oxo-1,2,3,4-tetrahydroanthracene-2-carboxyl-[ACP] + NADP(+) + H2O. The protein operates within secondary metabolite biosynthesis. FAD-dependent monooxygenase; part of the gene cluster that mediates the biosynthesis of the linear tetracyclic TAN-1612 neuropeptide Y receptor antagonist. The decaketide backbone of TAN-1612 is synthesized by the non-reducing polyketide synthase adaA via condensation of one acetyl-CoA starter unit with 9 malonyl-CoA units. The FAD-dependent monooxygenase adaC then performs hydroxylation at C2 while the polaketide chain is still attached to the NRPKS adaA. The alpha-hydroxylation step at C2 appears to be crucial for the following C18-C1 Claisen cyclization and release of the C9-hydroxyl version of TAN-1612 from the NRPKS adaA, two steps performed by the lactamase-like protein adaB. Finally, the O-methyltransferase adaD performs the C9 O-methylation to complete the biosynthesis of TAN-1612. This is FAD-dependent monooxygenase adaC from Aspergillus niger.